The following is a 617-amino-acid chain: mRNA-decapping enzyme 1B (617 aa).

An N-acetylalanine modification is found at alanine 2. Residue serine 147 is modified to Phosphoserine. Phosphotyrosine is present on tyrosine 191. 2 disordered regions span residues 195-222 (NLIK…LDPE) and 243-266 (TVEP…KLPI). The segment covering 205 to 219 (SENQQQRIPQPNQTL) has biased composition (polar residues). Residues 252–261 (QQQQQQQQQQ) are compositionally biased toward low complexity. A phosphoserine mark is found at serine 275 and serine 336. The disordered stretch occupies residues 362–426 (TPGAANKCDP…VGHQAHGREQ (65 aa)). A compositionally biased stretch (low complexity) spans 371–381 (PSTPAPASSAA). Threonine 392 bears the Phosphothreonine mark. Residues serine 448 and serine 511 each carry the phosphoserine modification.

Belongs to the DCP1 family. Interacts with DCP1A. As to quaternary structure, (Microbial infection) Interacts with rotavirus A non-structural protein 2; this interaction probably plays a role in the sequestration of DCP1B in viral factories. Interacts with rotavirus A non-structural protein 5; this interaction probably plays a role in its sequestration in viral factories.

The protein resides in the cytoplasm. It is found in the nucleus. The catalysed reaction is a 5'-end (N(7)-methyl 5'-triphosphoguanosine)-ribonucleoside in mRNA + H2O = N(7)-methyl-GDP + a 5'-end phospho-ribonucleoside in mRNA + 2 H(+). May play a role in the degradation of mRNAs, both in normal mRNA turnover and in nonsense-mediated mRNA decay. May remove the 7-methyl guanine cap structure from mRNA molecules, yielding a 5'-phosphorylated mRNA fragment and 7m-GDP. This chain is mRNA-decapping enzyme 1B (DCP1B), found in Homo sapiens (Human).